We begin with the raw amino-acid sequence, 59 residues long: UPF0434 protein Sbal_1685 (59 aa).

Belongs to the UPF0434 family.

The chain is UPF0434 protein Sbal_1685 from Shewanella baltica (strain OS155 / ATCC BAA-1091).